The sequence spans 1033 residues: Probable LRR receptor-like serine/threonine-protein kinase At1g56140 (1033 aa).

A signal peptide spans 1 to 28 (MLRLWRYLCLLLTVWFLCNFGPVYVVRA). Residues 29–636 (QNRTGATTHP…PSKGKSMTGT (608 aa)) are Extracellular-facing. N-linked (GlcNAc...) asparagine glycosylation is found at Asn-30, Asn-60, and Asn-94. LRR repeat units lie at residues 97–121 (ICRITNIKVYAMEVVGSIPQQLWTL), 122–145 (EYLTNLNLGQNVLTGSLPPALGNL), 147–169 (RMRWMTFGINALSGPIPKEIGLL), 170–193 (TDLRLLSISSNNFSGSIPDEIGRC), 195–217 (KLQQIYIDSSGLSGGLPVSFANL), 241–264 (WTKLTTLRILGTGLSGPIPASFSN), 265–288 (LTSLTELRLGDISNGNSSLEFIKD), 289–313 (MKSLSILVLRNNNLTGTIPSNIGEY), 314–337 (SSLRQLDLSFNKLHGTIPASLFNL), 339–361 (QLTHLFLGNNTLNGSLPTQKGQS), 363–382 (SNVDVSYNDLSGSLPSWVSL), 383–406 (PNLNLNLVANNFTLEGLDNRVLSG), and 422–445 (IYSDFSINCGGPEIRSVTEAVFER). Asn-144 carries an N-linked (GlcNAc...) asparagine glycan. Residue Asn-181 is glycosylated (N-linked (GlcNAc...) asparagine). Asn-264, Asn-280, and Asn-301 each carry an N-linked (GlcNAc...) asparagine glycan. Residues Asn-347 and Asn-351 are each glycosylated (N-linked (GlcNAc...) asparagine). Asn-393 carries an N-linked (GlcNAc...) asparagine glycan. A glycan (N-linked (GlcNAc...) asparagine) is linked at Asn-579. A helical transmembrane segment spans residues 637 to 657 (IVGVIVGVGLLSIISGVVIFI). Residues 658 to 1033 (IRKRRKRYTD…MLGAQMNEGR (376 aa)) lie on the Cytoplasmic side of the membrane. At Thr-682 the chain carries Phosphothreonine. In terms of domain architecture, Protein kinase spans 693-951 (FDPSNKLGEG…LCTQTSHALR (259 aa)). ATP-binding positions include 699–707 (LGEGGFGPV) and Lys-721. Tyr-766 carries the post-translational modification Phosphotyrosine. Asp-817 acts as the Proton acceptor in catalysis. Phosphoserine is present on residues Ser-821 and Ser-850. Phosphothreonine occurs at positions 851 and 856. Tyr-864 is modified (phosphotyrosine). The segment at 1012–1033 (SEISPRNNDARPMLGAQMNEGR) is disordered.

This sequence belongs to the protein kinase superfamily. Ser/Thr protein kinase family.

Its subcellular location is the membrane. It carries out the reaction L-seryl-[protein] + ATP = O-phospho-L-seryl-[protein] + ADP + H(+). The enzyme catalyses L-threonyl-[protein] + ATP = O-phospho-L-threonyl-[protein] + ADP + H(+). The sequence is that of Probable LRR receptor-like serine/threonine-protein kinase At1g56140 from Arabidopsis thaliana (Mouse-ear cress).